The sequence spans 199 residues: FMN-dependent NADH:quinone oxidoreductase 1 (199 aa).

Residues Ser-10, 17–19 (SNS), and 87–90 (MYNF) contribute to the FMN site.

The protein belongs to the azoreductase type 1 family. As to quaternary structure, homodimer. FMN is required as a cofactor.

The enzyme catalyses 2 a quinone + NADH + H(+) = 2 a 1,4-benzosemiquinone + NAD(+). It carries out the reaction N,N-dimethyl-1,4-phenylenediamine + anthranilate + 2 NAD(+) = 2-(4-dimethylaminophenyl)diazenylbenzoate + 2 NADH + 2 H(+). Its function is as follows. Quinone reductase that provides resistance to thiol-specific stress caused by electrophilic quinones. Functionally, also exhibits azoreductase activity. Catalyzes the reductive cleavage of the azo bond in aromatic azo compounds to the corresponding amines. The polypeptide is FMN-dependent NADH:quinone oxidoreductase 1 (Mesoplasma florum (strain ATCC 33453 / NBRC 100688 / NCTC 11704 / L1) (Acholeplasma florum)).